The primary structure comprises 410 residues: Dual-specificity RNA methyltransferase RlmN (410 aa).

Residues V7–A26 form a disordered region. Positions Q15–A26 are enriched in low complexity. E120 acts as the Proton acceptor in catalysis. The Radical SAM core domain occupies T130–D373. Cysteines 137 and 378 form a disulfide. 3 residues coordinate [4Fe-4S] cluster: C144, C148, and C151. S-adenosyl-L-methionine is bound by residues G200–E201, S232, S254–H256, and N335. The active-site S-methylcysteine intermediate is the C378.

It belongs to the radical SAM superfamily. RlmN family. The cofactor is [4Fe-4S] cluster.

The protein localises to the cytoplasm. It catalyses the reaction adenosine(2503) in 23S rRNA + 2 reduced [2Fe-2S]-[ferredoxin] + 2 S-adenosyl-L-methionine = 2-methyladenosine(2503) in 23S rRNA + 5'-deoxyadenosine + L-methionine + 2 oxidized [2Fe-2S]-[ferredoxin] + S-adenosyl-L-homocysteine. It carries out the reaction adenosine(37) in tRNA + 2 reduced [2Fe-2S]-[ferredoxin] + 2 S-adenosyl-L-methionine = 2-methyladenosine(37) in tRNA + 5'-deoxyadenosine + L-methionine + 2 oxidized [2Fe-2S]-[ferredoxin] + S-adenosyl-L-homocysteine. Its function is as follows. Specifically methylates position 2 of adenine 2503 in 23S rRNA and position 2 of adenine 37 in tRNAs. m2A2503 modification seems to play a crucial role in the proofreading step occurring at the peptidyl transferase center and thus would serve to optimize ribosomal fidelity. The chain is Dual-specificity RNA methyltransferase RlmN from Acinetobacter baumannii (strain AB307-0294).